A 540-amino-acid polypeptide reads, in one-letter code: Cystathionine gamma-synthase 1, chloroplastic (540 aa).

The N-terminal 78 residues, 1–78 (MAVSSCARAF…RNCSNIGVAQ (78 aa)), are a transit peptide targeting the chloroplast. Tyrosine 203, arginine 205, glycine 233, methionine 234, tyrosine 258, serine 353, and threonine 355 together coordinate pyridoxal 5'-phosphate. Lysine 356 is subject to N6-(pyridoxal phosphate)lysine.

It belongs to the trans-sulfuration enzymes family. Forms homotetramers composed of 2 homodimers. Requires pyridoxal 5'-phosphate as cofactor.

It localises to the plastid. The protein resides in the chloroplast. The catalysed reaction is O-phospho-L-homoserine + L-cysteine = L,L-cystathionine + phosphate. The enzyme catalyses O-succinyl-L-homoserine + L-cysteine = L,L-cystathionine + succinate + H(+). The protein operates within amino-acid biosynthesis; L-methionine biosynthesis via de novo pathway; L-cystathionine from O-succinyl-L-homoserine: step 1/1. With respect to regulation, irreversibly inactivated by DL-propargylglycine. Catalyzes the first committed step of methionine (Met) biosynthesis. Catalyzes the formation of L-cystathionine from homoserine esters and L-cysteine, via a gamma-replacement reaction. This Nicotiana tabacum (Common tobacco) protein is Cystathionine gamma-synthase 1, chloroplastic.